A 626-amino-acid polypeptide reads, in one-letter code: Chaperone protein HtpG (626 aa).

Positions 1 to 339 (MSTNQETRGF…SNDLPLNVSR (339 aa)) are a; substrate-binding. The tract at residues 340-555 (EILQDNKVTA…NDQMTTQMAK (216 aa)) is b. Residues 556-626 (LFAAAGQPVP…FIKRINKLLG (71 aa)) form a c region.

This sequence belongs to the heat shock protein 90 family. In terms of assembly, homodimer.

It localises to the cytoplasm. In terms of biological role, molecular chaperone. Has ATPase activity. This chain is Chaperone protein HtpG, found in Aggregatibacter actinomycetemcomitans (Actinobacillus actinomycetemcomitans).